The following is a 469-amino-acid chain: Glutamate--tRNA ligase 2 (469 aa).

The 'HIGH' region motif lies at 8-18 (PSPTGFLHVGG). Positions 250–254 (KLSKR) match the 'KMSKS' region motif. K253 lines the ATP pocket.

This sequence belongs to the class-I aminoacyl-tRNA synthetase family. Glutamate--tRNA ligase type 1 subfamily. As to quaternary structure, monomer.

The protein resides in the cytoplasm. It catalyses the reaction tRNA(Glu) + L-glutamate + ATP = L-glutamyl-tRNA(Glu) + AMP + diphosphate. Catalyzes the attachment of glutamate to tRNA(Glu) in a two-step reaction: glutamate is first activated by ATP to form Glu-AMP and then transferred to the acceptor end of tRNA(Glu). The polypeptide is Glutamate--tRNA ligase 2 (Thermotoga petrophila (strain ATCC BAA-488 / DSM 13995 / JCM 10881 / RKU-1)).